Reading from the N-terminus, the 1097-residue chain is uncharacterized protein (1097 aa).

A coiled-coil region spans residues 31–1087 (LLNVARQEEE…TALNKLRTRH (1057 aa)).

It belongs to the TRAFAC class myosin-kinesin ATPase superfamily. Myosin family. As to expression, specifically expressed in muscles of the head including temporalis and tensor veli palatini.

Its function is as follows. Has most probably lost the function in masticatory muscles contraction suspected for its homologs in dog (AC F1PT61) and apes. This is an uncharacterized protein from Homo sapiens (Human).